The chain runs to 219 residues: Auxin-responsive protein IAA24 (219 aa).

Residues 24–28 carry the EAR-like (transcriptional repression) motif; it reads LCLRL. Disordered regions lie at residues 24–88 and 109–128; these read LCLR…AKAQ and AAAA…QQGG. Polar residues predominate over residues 60–71; the sequence is STDSMASGTGTS. The PB1 domain maps to 129 to 215; it reads GLYVKVSMDG…SCKKLRIMKG (87 aa).

It belongs to the Aux/IAA family. As to quaternary structure, homodimers and heterodimers. Highly expressed in flowers. Expressed in seedlings.

Its subcellular location is the nucleus. Its function is as follows. Aux/IAA proteins are short-lived transcriptional factors that function as repressors of early auxin response genes at low auxin concentrations. The protein is Auxin-responsive protein IAA24 (IAA24) of Oryza sativa subsp. japonica (Rice).